A 259-amino-acid polypeptide reads, in one-letter code: V-type proton ATPase subunit D (259 aa).

The tract at residues 214–259 (KLKEQEAAQRALEGPPKEEAGGTHSENQPPRNLLAVEEDNLPVLFN) is disordered.

This sequence belongs to the V-ATPase D subunit family. V-ATPase is a heteromultimeric enzyme made up of two complexes: the ATP-hydrolytic V1 complex and the proton translocation V0 complex. The V1 complex consists of three catalytic AB heterodimers that form a heterohexamer, three peripheral stalks each consisting of EG heterodimers, one central rotor including subunits D and F, and the regulatory subunits C and H. The proton translocation complex V0 consists of the proton transport subunit a, a ring of proteolipid subunits c9c'', rotary subunit d, and The proton translocation complex V0 consists of the proton transport subunit a, a ring of proteolipid subunits c9c'', rotary subunit d, subunits e and f, and the accessory subunits vah-19/Ac45 and vah-20/PRR.

Functionally, subunit of the V1 complex of vacuolar(H+)-ATPase (V-ATPase), a multisubunit enzyme composed of a peripheral complex (V1) that hydrolyzes ATP and a membrane integral complex (V0) that translocates protons. V-ATPase is responsible for acidifying and maintaining the pH of intracellular compartments and in some cell types, is targeted to the plasma membrane, where it is responsible for acidifying the extracellular environment. The polypeptide is V-type proton ATPase subunit D (Caenorhabditis briggsae).